The primary structure comprises 289 residues: MTWFNRLKDYSKQQTDKLLNRYLTQIPSGIWRECPRCHSRFYYRRFGNFDVCPECGYGFRLTARKRLRMLTKDAVEWDADLVTKDPLSFPGYSEKLQRAQKITKLNESVWTGLALLDKRSVALGIMDPYFIMGSLGMITGEKLARLFERATLHELPVILFTASGGARMQEGIHSLMQMSKVTAAVNRHRQAGLLYIVVLTDPTTGGVIASFAMEADITIAEPKALIGFAGRRVIEQTVKQKLPADFQSAEQLQKNGFVDEIVPREHLTEELKLLLDMNQSNAWRANHDK.

In terms of domain architecture, CoA carboxyltransferase N-terminal spans I30–K289. C34, C37, C52, and C55 together coordinate Zn(2+). The C4-type zinc finger occupies C34–C55.

The protein belongs to the AccD/PCCB family. Acetyl-CoA carboxylase is a heterohexamer composed of biotin carboxyl carrier protein (AccB), biotin carboxylase (AccC) and two subunits each of ACCase subunit alpha (AccA) and ACCase subunit beta (AccD). The cofactor is Zn(2+).

It localises to the cytoplasm. The enzyme catalyses N(6)-carboxybiotinyl-L-lysyl-[protein] + acetyl-CoA = N(6)-biotinyl-L-lysyl-[protein] + malonyl-CoA. It functions in the pathway lipid metabolism; malonyl-CoA biosynthesis; malonyl-CoA from acetyl-CoA: step 1/1. In terms of biological role, component of the acetyl coenzyme A carboxylase (ACC) complex. Biotin carboxylase (BC) catalyzes the carboxylation of biotin on its carrier protein (BCCP) and then the CO(2) group is transferred by the transcarboxylase to acetyl-CoA to form malonyl-CoA. The protein is Acetyl-coenzyme A carboxylase carboxyl transferase subunit beta of Oenococcus oeni (strain ATCC BAA-331 / PSU-1).